We begin with the raw amino-acid sequence, 1136 residues long: Nuclear pore complex protein Nup133 (1136 aa).

Positions 1–26 are disordered; it reads MFSPRGTPGSGRRQAPRTGGRRSVSA.

It belongs to the nucleoporin Nup133 family. In terms of assembly, forms part of the Nup160 subcomplex in the nuclear pore which is composed of NUP160, NUP133, NUP107 and Nup96. This complex plays a role in RNA export and in tethering Nup98 and NUP153 to the nucleus. As to expression, widely expressed in the embryo and in adult tissues. Higher expression is observed in the brain, testes, ovary, skin, and kidney.

The protein localises to the nucleus. The protein resides in the nuclear pore complex. It localises to the chromosome. Its subcellular location is the centromere. It is found in the kinetochore. In terms of biological role, involved in poly(A)+ RNA transport. Involved in nephrogenesis. This is Nuclear pore complex protein Nup133 from Danio rerio (Zebrafish).